The sequence spans 622 residues: Golgin subfamily A member 6-like protein 7 (622 aa).

Disordered stretches follow at residues 1 to 82 (MMSE…QQAL), 251 to 496 (RKHE…RKQV), and 511 to 580 (EKMQ…HDNR). Composition is skewed to basic and acidic residues over residues 57-74 (SPEDKQQNRAQLKEENKA), 251-275 (RKHEEKMWRQEQRLRDQEKELREQE), 283-332 (EQMR…KQEE), 339-367 (EQMRKQEKQMLKQKEQMRKQEEQMWKQEE), 374-388 (EQMRKQEEQMWKQEE), and 395-420 (EQMRKQEEQMWKQEEQMGEQMRKQEE). Residues 100 to 534 (KTELETALHD…EKRREKKERM (435 aa)) are a coiled coil. The span at 477–489 (QMGEQEEQMGEQE) shows a compositional bias: acidic residues. 2 stretches are compositionally biased toward basic and acidic residues: residues 511-546 (EKMQEEEEKIRRQVEKRREKKERMGEQEKTQEERCS) and 567-580 (PAREAGKGYSHDNR).

Belongs to the GOLGA6 family.

The polypeptide is Golgin subfamily A member 6-like protein 7 (Homo sapiens (Human)).